The following is a 289-amino-acid chain: Putative 2-aminoethylphosphonate transport system permease protein PhnU (289 aa).

Helical transmembrane passes span 19–39, 76–96, 111–131, 150–170, 202–222, and 254–274; these read WLLLPLLVLATLFFWPLSLIV, FFATAGCLLLGSVMSLILVFI, FIALPTFLITLAFTFIYGSAG, FLYSMQGVILAEITVFTPLVM, VIFPAALPALMAGGSLCLLLT, and YTVACMIALINIVLSLGLFSL. In terms of domain architecture, ABC transmembrane type-1 spans 68 to 275; sequence LLNTLQIAFF…VLSLGLFSLY (208 aa).

The protein belongs to the binding-protein-dependent transport system permease family.

Its subcellular location is the cell inner membrane. In terms of biological role, probably part of the PhnSTUV complex (TC 3.A.1.11.5) involved in 2-aminoethylphosphonate import. Probably responsible for the translocation of the substrate across the membrane. This Salmonella paratyphi A (strain ATCC 9150 / SARB42) protein is Putative 2-aminoethylphosphonate transport system permease protein PhnU (phnU).